The sequence spans 528 residues: D-3-phosphoglycerate dehydrogenase (528 aa).

NAD(+) contacts are provided by residues 151 to 152 (RI), Asp171, 230 to 232 (AAR), and Asp256. The active site involves Arg232. Glu261 is an active-site residue. The active-site Proton donor is the His279. An NAD(+)-binding site is contributed by 279-282 (HLGA). The ACT domain occupies 455–527 (NLIIHYVDRP…DAYKLEVVDL (73 aa)).

The protein belongs to the D-isomer specific 2-hydroxyacid dehydrogenase family.

It carries out the reaction (2R)-3-phosphoglycerate + NAD(+) = 3-phosphooxypyruvate + NADH + H(+). It catalyses the reaction (R)-2-hydroxyglutarate + NAD(+) = 2-oxoglutarate + NADH + H(+). It participates in amino-acid biosynthesis; L-serine biosynthesis; L-serine from 3-phospho-D-glycerate: step 1/3. Functionally, catalyzes the reversible oxidation of 3-phospho-D-glycerate to 3-phosphonooxypyruvate, the first step of the phosphorylated L-serine biosynthesis pathway. Also catalyzes the reversible oxidation of 2-hydroxyglutarate to 2-oxoglutarate. The protein is D-3-phosphoglycerate dehydrogenase (serA) of Mycobacterium bovis (strain ATCC BAA-935 / AF2122/97).